We begin with the raw amino-acid sequence, 351 residues long: Photosystem II D2 protein (351 aa).

Residues 39-59 (CSYLALGAWFTGTTFVTSWYT) traverse the membrane as a helical segment. His116 serves as a coordination point for chlorophyll a. The helical transmembrane segment at 123-139 (GFCLRQFEIARLVGIRP) threads the bilayer. Pheophytin a-binding residues include Gln128 and Asn141. A helical transmembrane segment spans residues 151–164 (VFVSVFLIYPLGQA). His196 contributes to the chlorophyll a binding site. Residues 206–226 (GALLCAIHGATVENTLFEDGE) form a helical membrane-spanning segment. Positions 213 and 260 each coordinate a plastoquinone. Position 213 (His213) interacts with Fe cation. His267 provides a ligand contact to Fe cation. A helical transmembrane segment spans residues 277 to 293 (GLWTSSIGIIGLALNLR).

This sequence belongs to the reaction center PufL/M/PsbA/D family. PSII is composed of 1 copy each of membrane proteins PsbA, PsbB, PsbC, PsbD, PsbE, PsbF, PsbH, PsbI, PsbJ, PsbK, PsbL, PsbM, PsbT, PsbY, PsbZ, Psb30/Ycf12, at least 3 peripheral proteins of the oxygen-evolving complex and a large number of cofactors. It forms dimeric complexes. The D1/D2 heterodimer binds P680, chlorophylls that are the primary electron donor of PSII, and subsequent electron acceptors. It shares a non-heme iron and each subunit binds pheophytin, quinone, additional chlorophylls, carotenoids and lipids. There is also a Cl(-1) ion associated with D1 and D2, which is required for oxygen evolution. The PSII complex binds additional chlorophylls, carotenoids and specific lipids. serves as cofactor.

The protein localises to the plastid. Its subcellular location is the chloroplast thylakoid membrane. The enzyme catalyses 2 a plastoquinone + 4 hnu + 2 H2O = 2 a plastoquinol + O2. Functionally, photosystem II (PSII) is a light-driven water:plastoquinone oxidoreductase that uses light energy to abstract electrons from H(2)O, generating O(2) and a proton gradient subsequently used for ATP formation. It consists of a core antenna complex that captures photons, and an electron transfer chain that converts photonic excitation into a charge separation. The D1/D2 (PsbA/PsbD) reaction center heterodimer binds P680, the primary electron donor of PSII as well as several subsequent electron acceptors. D2 is needed for assembly of a stable PSII complex. This Galdieria sulphuraria (Red alga) protein is Photosystem II D2 protein.